Consider the following 485-residue polypeptide: MSGVVRSSPGSSQPPPPPPHHPPSSPVPVTSTPVIPPIRRHLAFASTKPPFHPSDDYHRFNPSSLSNNNDRSFVHGCGVVDREEDAVVVRSPSRKRKATMDMVVAPSNNGFTSSGFTNIPSSPCQTPRKGGRVNIKSKAKGNKSTPQTPISTNAGSPITLTPSGSCRYDSSLGLLTKKFVNLIKQAKDGMLDLNKAAETLEVQKRRIYDITNVLEGIDLIEKPFKNRILWKGVDACPGDEDADVSVLQLQAEIENLALEEQALDNQIRQTEERLRDLSENEKNQKWLFVTEEDIKSLPGFQNQTLIAVKAPHGTTLEVPDPDEAADHPQRRYRIILRSTMGPIDVYLVSEFEGKFEDTNGSGAAPPACLPIASSSGSTGHHDIEALTVDNPETAIVSHDHPHPQPGDTSDLNYLQEQVGGMLKITPSDVENDESDYWLLSNAEISMTDIWKTDSGIDWDYGIADVSTPPPGMGEIAPTAVDSTPR.

Positions 1-11 (MSGVVRSSPGS) are enriched in low complexity. Disordered stretches follow at residues 1–69 (MSGV…SNNN) and 114–159 (SGFT…SPIT). Over residues 12–26 (SQPPPPPPHHPPSSP) the composition is skewed to pro residues. Polar residues predominate over residues 114 to 125 (SGFTNIPSSPCQ). Residues 129–141 (KGGRVNIKSKAKG) show a composition bias toward basic residues. Residues 142–159 (NKSTPQTPISTNAGSPIT) are compositionally biased toward polar residues. Residues 167–232 (RYDSSLGLLT…PFKNRILWKG (66 aa)) mediate DNA binding. A coiled-coil region spans residues 245–286 (SVLQLQAEIENLALEEQALDNQIRQTEERLRDLSENEKNQKW). Residues 249–277 (LQAEIENLALEEQALDNQIRQTEERLRDL) form a leucine-zipper region. The interval 435–450 (DYWLLSNAEISMTDIW) is retinoblastoma protein binding.

This sequence belongs to the E2F/DP family. In terms of assembly, heterodimer with DP proteins. Interacts (via dimerization domain) preferentially with DPA, but also with DPB. Interacts with maize retinoblastoma-related protein RBR1. No interaction with E2FD. Highly expressed in the shoot apical meristem, emerging leaf primordia, and vascular tissues of young leaf primordia. Expressed in flowers, in epidermis and cortex of hypocotyls, and at lower levels in leaves.

It is found in the cytoplasm. The protein resides in the nucleus. Functionally, transcription activator that binds DNA cooperatively with DP proteins through the E2 recognition site, 5'-TTTC[CG]CGC-3' found in the promoter region of a number of genes whose products are involved in cell cycle regulation or in DNA replication. The binding of retinoblastoma-related proteins represses transactivation. Regulates gene expression both positively and negatively. Activates the expression of E2FB. Involved in the control of cell-cycle progression from G1 to S phase. Stimulates cell proliferation and delays differentiation. This is Transcription factor E2FA (E2FA) from Arabidopsis thaliana (Mouse-ear cress).